The following is a 279-amino-acid chain: MGNQQQHPIGIFDSGLGGITVLRALYRQLPQESIIYFADTARLPYGDRSPEELIQYVREILTWMEAQGVKMVVMACNTSSAIALDVIRSEFKTPVLGLILPGARGAVSQGKRIGVIATQATVNSGAYENAILEANPEAAVWQMPCPEFVPLIEANRINDPHTKRIVQKRLQPLLEQGIDTLVYGCTHYRHLSGVIQSILPSHVICVDPAEYVVSATEQELELMGWKNPQSPLPTRFAVSGCPDQFAQSAKGWLGHQPLVEQVDLKNLIMNASPLSITNG.

Substrate contacts are provided by residues 13–14 (DS) and 45–46 (YG). The active-site Proton donor/acceptor is Cys76. 77–78 (NT) contacts substrate. Residue Cys185 is the Proton donor/acceptor of the active site. 186–187 (TH) contributes to the substrate binding site.

The protein belongs to the aspartate/glutamate racemases family.

The enzyme catalyses L-glutamate = D-glutamate. The protein operates within cell wall biogenesis; peptidoglycan biosynthesis. Functionally, provides the (R)-glutamate required for cell wall biosynthesis. This is Glutamate racemase from Picosynechococcus sp. (strain ATCC 27264 / PCC 7002 / PR-6) (Agmenellum quadruplicatum).